The following is a 497-amino-acid chain: COP9 signalosome complex subunit 3 (497 aa).

The PCI domain occupies 233–408 (QAFDAFERCV…DGSPAYLTFL (176 aa)).

Belongs to the CSN3 family. Component of the COP9 signalosome (CSN) complex.

Its subcellular location is the cytoplasm. The protein resides in the nucleus. In terms of biological role, component of the COP9 signalosome (CSN) complex that acts as an regulator of the ubiquitin (Ubl) conjugation pathway by mediating the deneddylation of the cullin subunit of SCF-type E3 ubiquitin-protein ligase complexes. The CSN complex is involved in the regulation of the circadian clock through its control of the stability of the SCF(FWD1) complex. This chain is COP9 signalosome complex subunit 3 (csn-3), found in Neurospora crassa (strain ATCC 24698 / 74-OR23-1A / CBS 708.71 / DSM 1257 / FGSC 987).